A 171-amino-acid chain; its full sequence is Probable chemoreceptor glutamine deamidase CheD 1 (171 aa).

Low complexity predominate over residues 1–18 (MTRTTGAAPDRAAPAAGE). The tract at residues 1–23 (MTRTTGAAPDRAAPAAGETPGGG) is disordered.

Belongs to the CheD family.

The enzyme catalyses L-glutaminyl-[protein] + H2O = L-glutamyl-[protein] + NH4(+). Its function is as follows. Probably deamidates glutamine residues to glutamate on methyl-accepting chemotaxis receptors (MCPs), playing an important role in chemotaxis. The chain is Probable chemoreceptor glutamine deamidase CheD 1 from Anaeromyxobacter dehalogenans (strain 2CP-C).